A 157-amino-acid chain; its full sequence is Lipoprotein signal peptidase (157 aa).

Transmembrane regions (helical) follow at residues 10-30 (LIFI…KYAI), 58-78 (FLEG…FIFL), and 84-104 (LFKN…SNVL). Active-site residues include Asp-114 and Asp-131. Residues 122–142 (FDFAIFNFADVMIDVGVGVLL) form a helical membrane-spanning segment.

It belongs to the peptidase A8 family.

It is found in the cell inner membrane. It carries out the reaction Release of signal peptides from bacterial membrane prolipoproteins. Hydrolyzes -Xaa-Yaa-Zaa-|-(S,diacylglyceryl)Cys-, in which Xaa is hydrophobic (preferably Leu), and Yaa (Ala or Ser) and Zaa (Gly or Ala) have small, neutral side chains.. The protein operates within protein modification; lipoprotein biosynthesis (signal peptide cleavage). In terms of biological role, this protein specifically catalyzes the removal of signal peptides from prolipoproteins. The sequence is that of Lipoprotein signal peptidase from Helicobacter pylori (strain Shi470).